Here is a 192-residue protein sequence, read N- to C-terminus: Cytochrome b-245 light chain (192 aa).

Over 2 to 7 (GQIEWA) the chain is Cytoplasmic. Residues 8–30 (MWANEQALASGLILITGGIVATA) traverse the membrane as a helical segment. Topologically, residues 31 to 35 (GRFTQ) are extracellular. The helical transmembrane segment at 36–53 (WYFGAYSIAAGVLICLLE) threads the bilayer. Residues 54 to 69 (YPRGKRKKGSTMERCG) lie on the Cytoplasmic side of the membrane. Residues 70–80 (QKYLTSVVKLF) lie within the membrane without spanning it. The Cytoplasmic segment spans residues 81–86 (GPLTRN). A helical membrane pass occupies residues 87–104 (YYVRAALHFLLSVPAGFL). A topological domain (extracellular) is located at residue Leu105. Residues 106 to 126 (ATILGTVCLAIASVIYLLAAI) traverse the membrane as a helical segment. At 127-192 (RGEQWTPIEP…NPMPVTDEVV (66 aa)) the chain is on the cytoplasmic side. Residues 134 to 192 (IEPKPKERPQVGGTIKQPPTNPPPRPPAEVRKKPSEGEEEAASAGGPQVNPMPVTDEVV) form a disordered region. Residue Thr147 is modified to Phosphothreonine. Lys149 participates in a covalent cross-link: Glycyl lysine isopeptide (Lys-Gly) (interchain with G-Cter in ubiquitin). Ser168 and Ser176 each carry phosphoserine.

The protein belongs to the p22phox family. In terms of assembly, component of the phagocyte NADPH oxidase core complex/cytochrome b558 complex, composed of CYBB (heavy chain (beta)) and CYBA (light chain (alpha)). Component of the phagocyte NADPH oxidase complex composed of an obligatory core heterodimer formed by the membrane proteins CYBA and CYBB and the cytosolic regulatory subunits NCF1/p47-phox, NCF2/p67-phox, NCF4/p40-phox and the small GTPase RAC1 or RAC2. Interacts with NCF1 (via SH3 domain). Interacts with SH3PXD2A. Interacts with DUOX1, DUOX2 and TPO. Interacts with NOX4; this interaction mediates superoxide generation. Interacts with calprotectin (S100A8/9). Interacts with GBP7. Interacts with NOXO1. Forms a heterodimer with NOX3 and is essential for activity and cell membrane localization of NOX3. Interacts with NOX1. In terms of processing, ubiquitinated at Lys-149 likely by RNF145. Post-translationally, phosphorylation at Thr-147 enhances NADPH oxidase activity by promoting NCF1/p47-phox binding. The strongest level of expression is found in kidney, peritoneal neutrophils and peritoneal macrophages, and a lower level in spleen and small intestine. Very low level of expression can be noted in brain, liver, testis, and heart.

The protein resides in the cell membrane. Its function is as follows. Subunit of NADPH oxidase complexes that is required for the NADPH oxidase activity that generates, in various cell types, superoxide from molecular oxygen utilizing NADPH as an electron donor. Subunit of the phagocyte NADPH oxidase complex that mediates the transfer of electrons from cytosolic NADPH to O2 to produce the superoxide anion (O2(-)). In the activated complex, electrons are first transferred from NADPH to flavin adenine dinucleotide (FAD) and subsequently transferred via two heme molecules to molecular oxygen, producing superoxide through an outer-sphere reaction. Activation of the NADPH oxidase complex is initiated by the assembly of cytosolic subunits of the NADPH oxidase complex with the core NADPH oxidase complex to form a complex at the plasma membrane or phagosomal membrane. This activation process is initiated by phosphorylation dependent binding of the cytosolic NCF1/p47-phox subunit to the C-terminus of CYBA/p22-phox. Aassociates with NOX3 to form a functional NADPH oxidase constitutively generating superoxide. This Mus musculus (Mouse) protein is Cytochrome b-245 light chain.